Here is a 1591-residue protein sequence, read N- to C-terminus: MSSFIPLNFLEDTVSKKDLEEEHTRELQVEQAYKLFQSALKLQKQKQYESAYKVYEELFKLDIVSNHYFEELDFIRGLQDGSQNTDTDELTLLSPNVKSLRYLIFRNRGFLYLDMLKSNTENKSAEKVKEMFYPLLDDFCIALLYNEPDEKLLETLHEIFSYIGSERLSRFVLEYSLTSRKESDDLSGLLPIDQTVLSQYKTMLEHLSSGKFPKLDLKHLSFLEPIRLDIFAQQEKLASKKVAVIKSTSTKWVDLLDAINIHLKENQDESKIEDANRPRIRIFEPYVLTEEPLDIVRIEFTKRGVAVPATETEVTKAQPEQIVQERKPEEDNRVQRSSKRLSKVEDEIPAVTLESSHFLNMDYFRNQMNETIPNFEIFDVCSTYVEDGSGAQYIKDFKNIVSDWNDSYARAILSYDTAKSEDDNLKLLDLLSGYGKSEELKEKNIPPLGEIDIEFPELNYVEFKTYIIKHLLSKILTTKWSDKLYEKFTEWIVQFEGYIINDIDVESAIGVLEVLVDISTSLESQIKDSINNKLNKAVVNSMCQDLLRIKDKIIRWINYIETFPINDLQVASRFKWCQIIKEKAETKSWTENHPVKHKLQKLLGDAHFKINYPNYKNFIDFSKDSINSQLTIISVLAIFWRILSTSSTEDNKEAIRLLEDILLDSNTEPSDAILSIRNFLKQGSIDMKLSLWNILLSFYQSSNSGDKLTVGFEECVLFLNDYLVNEYVLLDEESRLVTLSRILGFYGSSISFVVTSLASTNWILMHPIKVQTLRLFFELSLLFEINEEASYISSLATSIKSKSTKSYHHLTNTLIKTIILILASIQKSNPQILHSVIRLFHTQLGLIGICGHAGGSFLEIAQEYLKSLPNSDQDICQIIKCKYHYSISIDGVVPADHGTARLDELNKNDCKELASFVLPLCFSKGGSTLNNVPKHDIKLLIDEIYDVIGDPDFDSNEALGRNKATLNYFLDNTRLTKRLFQEAFHGLVRLELGEAEEDKQFNGLYYIEGLLLFSSYKLRKKNMQSRAVELESAISLFENDIICGSNRFESWFLLGQSYGYLVEDDLIWTADKLTASDRKITTANLQRKSLICYLMAINKSLDESIKDVIKPVVGNLMSLFAKEMFSAVCEPMSMHAFKVQSHPRFINRVNGALFEPVSQFPAVDKTVCLKIIQQSLQLSIKSSCREWSDYYYLAKVQRKLDKPAGLVMETMASACRSAFKNKHADNIIEPHYNLVSFALKYVKSNRLDSKDALKYLIEDPLIKLEVGEETDFIKLIIKALNKIDSSDKKNWQHKAKYRLARLMQEEYHDVKGAIDQMSSFISLKTPNKALVSIWKPEPERPGKHFLYTFQYIHFYIELLKEIDDLDSLVAMLPKLRRSNSVMINLSIAWEILCSSVCKIIRESYGIGDNFEFTENLINTLPYQTFAANVKLLPDMMRRQSVPENLKSVLCFLFTVNDIKKLNNGYGPTSFIDDTLVTLYFMIYLNYFEKSSTEVTTDSPGLKKKIAKRDIFPLTNDILKAFKKDIEDVTKQKSYNELITAQKLKQGLNEDKSLENVPASANVNEIIVIDDDDDDNLSQEPATKKSKTESNS.

2 disordered regions span residues 316-340 and 1569-1591; these read KAQP…SSKR and DDDD…ESNS. Composition is skewed to basic and acidic residues over residues 323 to 334 and 1581 to 1591; these read VQERKPEEDNRV and ATKKSKTESNS.

This sequence belongs to the HIR3 family.

The protein localises to the nucleus. In terms of biological role, has a role in a nucleosome assembly pathway that is required for the integrity of heterochromatin and proper chromosome segregation. This is Histone transcription regulator 3 homolog (HIR3) from Candida albicans (strain SC5314 / ATCC MYA-2876) (Yeast).